Here is a 145-residue protein sequence, read N- to C-terminus: 3-hydroxyacyl-[acyl-carrier-protein] dehydratase FabZ (145 aa).

His-48 is a catalytic residue.

It belongs to the thioester dehydratase family. FabZ subfamily.

The protein resides in the cytoplasm. The catalysed reaction is a (3R)-hydroxyacyl-[ACP] = a (2E)-enoyl-[ACP] + H2O. Involved in unsaturated fatty acids biosynthesis. Catalyzes the dehydration of short chain beta-hydroxyacyl-ACPs and long chain saturated and unsaturated beta-hydroxyacyl-ACPs. This Geobacillus thermodenitrificans (strain NG80-2) protein is 3-hydroxyacyl-[acyl-carrier-protein] dehydratase FabZ.